Consider the following 67-residue polypeptide: Probable tautomerase K2 (67 aa).

Pro2 (proton acceptor; via imino nitrogen) is an active-site residue.

The protein belongs to the 4-oxalocrotonate tautomerase family.

The polypeptide is Probable tautomerase K2 (Dickeya dadantii (strain 3937) (Erwinia chrysanthemi (strain 3937))).